The sequence spans 942 residues: NBPF family member NBPF8 (942 aa).

Positions alanine 89–leucine 130 form a coiled coil. A disordered region spans residues lysine 161–serine 203. The span at glutamate 165–glutamate 180 shows a compositional bias: acidic residues. One can recognise an Olduvai 1 domain in the interval glutamate 165–serine 259. A compositionally biased stretch (basic and acidic residues) spans glutamate 190–glutamate 201. Residues lysine 339–leucine 401 are a coiled coil. 6 Olduvai domains span residues glutamate 436 to proline 528, glutamate 529 to proline 617, serine 620 to aspartate 675, glutamate 676 to proline 767, serine 770 to lysine 843, and lysine 844 to phenylalanine 904. Disordered stretches follow at residues glutamate 451–serine 474 and proline 528–serine 566. 2 stretches are compositionally biased toward acidic residues: residues asparagine 530 to glutamate 539 and glutamate 550 to aspartate 562. The span at glycine 831 to arginine 849 shows a compositional bias: basic residues. The disordered stretch occupies residues glycine 831 to leucine 863.

The protein belongs to the NBPF family. In terms of tissue distribution, expressed in the mammary gland.

The protein resides in the cytoplasm. The polypeptide is NBPF family member NBPF8 (Homo sapiens (Human)).